A 268-amino-acid chain; its full sequence is Tryptophan synthase alpha chain (268 aa).

Active-site proton acceptor residues include E47 and D58.

This sequence belongs to the TrpA family. Tetramer of two alpha and two beta chains.

It localises to the plastid. Its subcellular location is the chloroplast. It catalyses the reaction (1S,2R)-1-C-(indol-3-yl)glycerol 3-phosphate + L-serine = D-glyceraldehyde 3-phosphate + L-tryptophan + H2O. It participates in amino-acid biosynthesis; L-tryptophan biosynthesis; L-tryptophan from chorismate: step 5/5. In terms of biological role, the alpha subunit is responsible for the aldol cleavage of indoleglycerol phosphate to indole and glyceraldehyde 3-phosphate. This chain is Tryptophan synthase alpha chain, found in Gracilaria tenuistipitata var. liui (Red alga).